Here is a 782-residue protein sequence, read N- to C-terminus: MDSSIHLSSLISRHDDEATRTSTSEGLEEGEVEGETLLIVESEDQASVDLSHDQSGDSLNSDEGDVSWMEEQLSYFCDKCQKWIPASQLREQLSYLKGDNFFRFTCSDCSADGKEQYERLKLTWQQVVMLAMYNLSLEGSGRQGYFRWKEDICAFIEKHWTFLLGNRKKTSTWWSTVAGCLSVGSPMYFRSGAQEFGEPGWWKLVHNKPPTMKPEGEKLSASTLKIKAASKPTLDPIITVEGLRKRASRNPVESAMELKEKRSRTQEAKDIRRAQKEAAGFLDRSTSSTPVKFISRGRRPDVILEKGEVIDFSSLSSSDRTPLTSPSPSPSLDFSAPGTPASHSATPSLLSEADLIPDVMPPQALFHDDDEMEGDGVIDPGMEYVPPPAGSVASGPVVGVRKKVRGPEQIKQEVESEEEKPDRMDIDSEDTDSNTSLQTRAREKRKPQLEKDTKPKEPRYTPVSIYEEKLLLKRLEACPGAVAMTPEARRLKRKLIVRQAKRDRGLPLFDLDQVVNAALLLVDGIYGAKEGGISRLPAGQATYRTTCQDFRILDRYQTSLPSRKGFRHQTTKFLYRLVGSEDMAVDQSIVSPYTSRILKPYIRRDYETKPPKLQLLSQIRSHLHRSDPHWTPEPDAPLDYCYVRPNHIPTINSMCQEFFWPGIDLSECLQYPDFSVVVLYKKVIIAFGFMVPDVKYNEAYISFLFVHPEWRRAGIATFMIYHLIQTCMGKDVTLHVSASNPAMLLYQKFGFKTEEYVLDFYDKYYPLESTECKHAFFLRLRR.

Phosphoserine is present on S4. Positions 13-33 are disordered; sequence RHDDEATRTSTSEGLEEGEVE. Position 231 is an N6-acetyllysine (K231). Residues 251–282 are disordered; the sequence is PVESAMELKEKRSRTQEAKDIRRAQKEAAGFL. Over residues 256 to 276 the composition is skewed to basic and acidic residues; the sequence is MELKEKRSRTQEAKDIRRAQK. A Phosphoserine modification is found at S285. K292 bears the N6-acetyllysine mark. A compositionally biased stretch (low complexity) spans 315 to 335; the sequence is LSSSDRTPLTSPSPSPSLDFS. Disordered regions lie at residues 315–346 and 400–460; these read LSSS…HSAT and VRKK…EPRY. Composition is skewed to basic and acidic residues over residues 405–426 and 446–459; these read RGPE…RMDI and KPQL…KEPR. S416 bears the Phosphoserine mark. The 145-residue stretch at 638 to 782 folds into the N-acetyltransferase domain; the sequence is LDYCYVRPNH…KHAFFLRLRR (145 aa).

Interacts with the LIM 1 domain of CSRP2. Component of the ADA2A-containing complex (ATAC), composed of CSRP2BP, KAT2A, TADA2L, TADA3L, ZZ3, MBIP, WDR5, YEATS2, CCDC101 and DR1. In the complex, it probably interacts directly with KAT2A, MBIP and WDR5. In terms of tissue distribution, expressed in skeletal muscle, heart, lung, placenta, brain, liver, pancreas and kidney. High expression in skeletal muscle and heart. Lower expression in lung.

It is found in the nucleus. The protein localises to the cytoplasm. In terms of biological role, component of the ATAC complex, a complex with histone acetyltransferase activity on histones H3 and H4. May function as a scaffold for the ATAC complex to promote ATAC complex stability. Has also weak histone acetyltransferase activity toward histone H4. Required for the normal progression through G1 and G2/M phases of the cell cycle. The protein is Cysteine-rich protein 2-binding protein of Homo sapiens (Human).